Here is a 393-residue protein sequence, read N- to C-terminus: Cysteine desulfurase (393 aa).

Residues 76–77 (GT), asparagine 155, glutamine 183, and 203–205 (SAH) each bind pyridoxal 5'-phosphate. N6-(pyridoxal phosphate)lysine is present on lysine 206. Pyridoxal 5'-phosphate is bound at residue threonine 241. The active-site Cysteine persulfide intermediate is the cysteine 328. [2Fe-2S] cluster is bound at residue cysteine 328.

It belongs to the class-V pyridoxal-phosphate-dependent aminotransferase family. NifS/IscS subfamily. Homodimer. The cofactor is pyridoxal 5'-phosphate.

It catalyses the reaction (sulfur carrier)-H + L-cysteine = (sulfur carrier)-SH + L-alanine. In terms of biological role, catalyzes the removal of elemental sulfur atoms from cysteine to produce alanine. Seems to participate in the biosynthesis of the nitrogenase metalloclusters by providing the inorganic sulfur required for the Fe-S core formation. This chain is Cysteine desulfurase, found in Bradyrhizobium diazoefficiens (strain JCM 10833 / BCRC 13528 / IAM 13628 / NBRC 14792 / USDA 110).